Consider the following 75-residue polypeptide: Small ribosomal subunit protein bS18 (75 aa).

Belongs to the bacterial ribosomal protein bS18 family. In terms of assembly, part of the 30S ribosomal subunit. Forms a tight heterodimer with protein bS6.

Binds as a heterodimer with protein bS6 to the central domain of the 16S rRNA, where it helps stabilize the platform of the 30S subunit. The polypeptide is Small ribosomal subunit protein bS18 (Methylobacillus flagellatus (strain ATCC 51484 / DSM 6875 / VKM B-1610 / KT)).